A 291-amino-acid chain; its full sequence is Putative GATA transcription factor 13 (291 aa).

The GATA-type zinc finger occupies 187 to 241; that stretch reads KSRRLKCTHCETTTTPQWREGPNGRKTLCNACGIRFRSGRLVLEYRPAASPTFIP. Residues 271 to 291 are disordered; it reads TSGPETRSRLRNFGRPMSYGQ.

This sequence belongs to the type IV zinc-finger family. Class A subfamily.

The protein resides in the nucleus. In terms of biological role, transcriptional activator that specifically binds 5'-GATA-3' or 5'-GAT-3' motifs within gene promoters. May be involved in the regulation of some light-responsive genes. This is Putative GATA transcription factor 13 (GATA13) from Arabidopsis thaliana (Mouse-ear cress).